Consider the following 146-residue polypeptide: 3-hydroxyacyl-[acyl-carrier-protein] dehydratase FabZ (146 aa).

The active site involves His51.

This sequence belongs to the thioester dehydratase family. FabZ subfamily.

The protein localises to the cytoplasm. It carries out the reaction a (3R)-hydroxyacyl-[ACP] = a (2E)-enoyl-[ACP] + H2O. Its function is as follows. Involved in unsaturated fatty acids biosynthesis. Catalyzes the dehydration of short chain beta-hydroxyacyl-ACPs and long chain saturated and unsaturated beta-hydroxyacyl-ACPs. This chain is 3-hydroxyacyl-[acyl-carrier-protein] dehydratase FabZ, found in Staphylococcus aureus (strain Mu3 / ATCC 700698).